The primary structure comprises 413 residues: DNA primase large subunit PriL (413 aa).

Residues Cys230, Cys301, Cys310, and Cys317 each contribute to the [4Fe-4S] cluster site. 3 stretches are compositionally biased toward basic and acidic residues: residues 340–356 (MEKE…QEEK), 362–381 (KEKQ…EEKG), and 388–413 (KKRE…KKRI). A disordered region spans residues 340–413 (MEKEKEEKEE…KEKQEEKKRI (74 aa)).

The protein belongs to the eukaryotic-type primase large subunit family. In terms of assembly, heterodimer of a small subunit (PriS) and a large subunit (PriL). [4Fe-4S] cluster serves as cofactor.

Its function is as follows. Regulatory subunit of DNA primase, an RNA polymerase that catalyzes the synthesis of short RNA molecules used as primers for DNA polymerase during DNA replication. Stabilizes and modulates the activity of the small subunit, increasing the rate of DNA synthesis, and conferring RNA synthesis capability. The DNA polymerase activity may enable DNA primase to also catalyze primer extension after primer synthesis. May also play a role in DNA repair. The polypeptide is DNA primase large subunit PriL (Methanosarcina barkeri (strain Fusaro / DSM 804)).